The primary structure comprises 260 residues: Flap endonuclease Xni (260 aa).

Position 109 (D109) interacts with Mg(2+). Positions 165–259 constitute a 5'-3' exonuclease domain; it reads VKPSQLADYW…DIRFTGPNKA (95 aa). Residues L176, P185, V187, and V190 each contribute to the K(+) site. The interval 189–194 is interaction with DNA; it reads GVGPKA.

The protein belongs to the Xni family. Mg(2+) serves as cofactor. It depends on K(+) as a cofactor.

Its function is as follows. Has flap endonuclease activity. During DNA replication, flap endonucleases cleave the 5'-overhanging flap structure that is generated by displacement synthesis when DNA polymerase encounters the 5'-end of a downstream Okazaki fragment. This Vibrio campbellii (strain ATCC BAA-1116) protein is Flap endonuclease Xni.